Here is a 106-residue protein sequence, read N- to C-terminus: ATP-dependent Clp protease adapter protein ClpS (106 aa).

Belongs to the ClpS family. As to quaternary structure, binds to the N-terminal domain of the chaperone ClpA.

Functionally, involved in the modulation of the specificity of the ClpAP-mediated ATP-dependent protein degradation. In Escherichia fergusonii (strain ATCC 35469 / DSM 13698 / CCUG 18766 / IAM 14443 / JCM 21226 / LMG 7866 / NBRC 102419 / NCTC 12128 / CDC 0568-73), this protein is ATP-dependent Clp protease adapter protein ClpS.